Here is a 127-residue protein sequence, read N- to C-terminus: Large ribosomal subunit protein uL22 (127 aa).

Positions 106–117 (GAPEGVPVGGAV) are enriched in low complexity. Residues 106 to 127 (GAPEGVPVGGAVDTPGDEEEEE) are disordered.

This sequence belongs to the universal ribosomal protein uL22 family. In terms of assembly, part of the 50S ribosomal subunit.

Its function is as follows. This protein binds specifically to 23S rRNA; its binding is stimulated by other ribosomal proteins, e.g. L4, L17, and L20. It is important during the early stages of 50S assembly. It makes multiple contacts with different domains of the 23S rRNA in the assembled 50S subunit and ribosome. Functionally, the globular domain of the protein is located near the polypeptide exit tunnel on the outside of the subunit, while an extended beta-hairpin is found that lines the wall of the exit tunnel in the center of the 70S ribosome. The chain is Large ribosomal subunit protein uL22 from Rubrobacter xylanophilus (strain DSM 9941 / JCM 11954 / NBRC 16129 / PRD-1).